Here is a 1350-residue protein sequence, read N- to C-terminus: Probable serine/threonine-protein kinase irlE (1350 aa).

Asparagine 37 carries an N-linked (GlcNAc...) asparagine glycan. The helical transmembrane segment at 149 to 169 (FWEILASCYGTISFIKFFNIF) threads the bilayer. The stretch at 731–802 (EAELKEKFEI…NIQQNYENQH (72 aa)) forms a coiled coil. Basic residues predominate over residues 761–771 (LKKKNKLKKQK). 2 disordered regions span residues 761-795 (LKKKNKLKKQKNQQQQQQAKQQAQQQKQQHQQNIQ) and 807-864 (RKFN…TTNS). Residues 772 to 795 (NQQQQQQAKQQAQQQKQQHQQNIQ) show a composition bias toward low complexity. Polar residues predominate over residues 809-823 (FNQQTKGRPISPSSI). A compositionally biased stretch (low complexity) spans 824–864 (QNQNLNPTLLQNQNQTSNPTPNLESTKKATPTTTTTTTTNS). Residues 903–1166 (KKESNILGRG…LSSVLKHPLF (264 aa)) enclose the Protein kinase domain. Residues 909–917 (LGRGSNGTL) and lysine 932 each bind ATP. Aspartate 1034 acts as the Proton acceptor in catalysis. A KEN domain is found at 1169–1346 (SLKKIKFLES…KNSIHFSNDT (178 aa)).

The protein belongs to the protein kinase superfamily. Ser/Thr protein kinase family.

It localises to the membrane. The enzyme catalyses L-seryl-[protein] + ATP = O-phospho-L-seryl-[protein] + ADP + H(+). It carries out the reaction L-threonyl-[protein] + ATP = O-phospho-L-threonyl-[protein] + ADP + H(+). This chain is Probable serine/threonine-protein kinase irlE (irlE), found in Dictyostelium discoideum (Social amoeba).